A 359-amino-acid chain; its full sequence is D-alanine--D-alanine ligase (359 aa).

The ATP-grasp domain maps to 141-346; the sequence is KRIFKEAGLP…YSTLLDELIN (206 aa). 172–227 serves as a coordination point for ATP; that stretch reads IEHLGYPCFVKPANLGSSVGITKVHNEEELPGALKLAAKYDRKLLIERGIDAREIE. Mg(2+) is bound by residues aspartate 299, glutamate 313, and asparagine 315.

This sequence belongs to the D-alanine--D-alanine ligase family. It depends on Mg(2+) as a cofactor. Mn(2+) is required as a cofactor.

The protein resides in the cytoplasm. It catalyses the reaction 2 D-alanine + ATP = D-alanyl-D-alanine + ADP + phosphate + H(+). It functions in the pathway cell wall biogenesis; peptidoglycan biosynthesis. In terms of biological role, cell wall formation. In Thermoanaerobacter pseudethanolicus (strain ATCC 33223 / 39E) (Clostridium thermohydrosulfuricum), this protein is D-alanine--D-alanine ligase.